The primary structure comprises 437 residues: tRNA-2-methylthio-N(6)-dimethylallyladenosine synthase (437 aa).

An MTTase N-terminal domain is found at 5–121; sequence KKLYIKTYGC…LPELTARAAT (117 aa). Residues Cys-14, Cys-50, Cys-84, Cys-159, Cys-163, and Cys-166 each coordinate [4Fe-4S] cluster. Residues 145-371 enclose the Radical SAM core domain; sequence AKRGPTAFLT…QALLTRQQRA (227 aa). One can recognise a TRAM domain in the interval 374 to 436; that stretch reads DAKVGTTARV…ANSLRGVLIA (63 aa).

This sequence belongs to the methylthiotransferase family. MiaB subfamily. As to quaternary structure, monomer. The cofactor is [4Fe-4S] cluster.

It is found in the cytoplasm. It catalyses the reaction N(6)-dimethylallyladenosine(37) in tRNA + (sulfur carrier)-SH + AH2 + 2 S-adenosyl-L-methionine = 2-methylsulfanyl-N(6)-dimethylallyladenosine(37) in tRNA + (sulfur carrier)-H + 5'-deoxyadenosine + L-methionine + A + S-adenosyl-L-homocysteine + 2 H(+). In terms of biological role, catalyzes the methylthiolation of N6-(dimethylallyl)adenosine (i(6)A), leading to the formation of 2-methylthio-N6-(dimethylallyl)adenosine (ms(2)i(6)A) at position 37 in tRNAs that read codons beginning with uridine. The polypeptide is tRNA-2-methylthio-N(6)-dimethylallyladenosine synthase (Dinoroseobacter shibae (strain DSM 16493 / NCIMB 14021 / DFL 12)).